Here is a 525-residue protein sequence, read N- to C-terminus: Chromaffin granule amine transporter (525 aa).

Residues 1-21 (MLRTILDAPQRLLKEGRASRQ) lie on the Cytoplasmic side of the membrane. A helical membrane pass occupies residues 22–42 (LVLVVVFVALLLDNMLFTVVV). Topologically, residues 43-138 (PIVPTFLYDM…TGFLEEEITR (96 aa)) are lumenal, vesicle. N58, N87, and N104 each carry an N-linked (GlcNAc...) asparagine glycan. The chain crosses the membrane as a helical span at residues 139 to 158 (VGVLFASKAVMQLLVNPFVG). At 159-167 (PLTNRIGYH) the chain is on the cytoplasmic side. The helical transmembrane segment at 168–188 (IPMFAGFVIMFLSTVMFAFSG) threads the bilayer. Residues 189-197 (TYTLLFVAR) lie on the Lumenal, vesicle side of the membrane. Residues 198–218 (TLQGIGSSFSSVAGLGMLASV) form a helical membrane-spanning segment. Residues 219 to 227 (YTDDHERGR) are Cytoplasmic-facing. The helical transmembrane segment at 228-250 (AMGTALGGLALGLLVGAPFGSVM) threads the bilayer. Topologically, residues 251–256 (YEFVGK) are lumenal, vesicle. Residues 257–279 (SAPFLILAFLALLDGALQLCILQ) form a helical membrane-spanning segment. Residues 280-299 (PSKVSPESAKGTPLFMLLKD) lie on the Cytoplasmic side of the membrane. Residues 300-319 (PYILVAAGSICFANMGVAIL) traverse the membrane as a helical segment. The Lumenal, vesicle portion of the chain corresponds to 320–335 (EPTLPIWMMQTMCSPK). Residues 336 to 360 (WQLGLAFLPASVSYLIGTNLFGVLA) traverse the membrane as a helical segment. The Cytoplasmic segment spans residues 361–365 (NKMGR). The helical transmembrane segment at 366 to 386 (WLCSLIGMLVVGTSLLCVPLA) threads the bilayer. At 387–397 (HNIFGLIGPNA) the chain is on the lumenal, vesicle side. A helical membrane pass occupies residues 398-418 (GLGLAIGMVDSSMMPIMGHLV). Over 419–422 (DLRH) the chain is Cytoplasmic. A helical transmembrane segment spans residues 423-443 (TSVYGSVYAIADVAFCMGFAI). Residues 444–448 (GPSTG) lie on the Lumenal, vesicle side of the membrane. Residues 449–470 (GAIVKAIGFPWLMVITGVINIV) form a helical membrane-spanning segment. Residues 471–525 (YAPLCYYLRSPPAKEEKLAILSQDCPMETRMYATQKPTKEFPLGEDSDEEPDHEE) lie on the Cytoplasmic side of the membrane. The interval 503–525 (ATQKPTKEFPLGEDSDEEPDHEE) is disordered. Residues 513–525 (LGEDSDEEPDHEE) are compositionally biased toward acidic residues.

This sequence belongs to the major facilitator superfamily. Vesicular transporter family. As to expression, expressed primarily in neuroendocrine tissues. Highly expressed in chromaffin cells of the adrenal medulla (at protein level). Detected in peripheral sympathetic ganglia (at protein level). Found in some paracrine cells in stomach and duodenum (at protein level). Expressed in substantia nigra. Expressed in gastrointestinal tract.

Its subcellular location is the cytoplasmic vesicle. It is found in the secretory vesicle membrane. The protein localises to the secretory vesicle. It localises to the synaptic vesicle membrane. The protein resides in the endoplasmic reticulum membrane. It catalyses the reaction serotonin(in) + 2 H(+)(out) = serotonin(out) + 2 H(+)(in). The catalysed reaction is (R)-noradrenaline(in) + 2 H(+)(out) = (R)-noradrenaline(out) + 2 H(+)(in). It carries out the reaction dopamine(in) + 2 H(+)(out) = dopamine(out) + 2 H(+)(in). Its activity is regulated as follows. Strongly inhibited by reserpine. Also inhibited to a lesser extent by ketanserin and fenfluramine. Not significantly inhibited by tetrabenazine. Electrogenic antiporter that exchanges one cationic monoamine with two intravesicular protons across the membrane of secretory and synaptic vesicles. Uses the electrochemical proton gradient established by the V-type proton-pump ATPase to accumulate high concentrations of monoamines inside the vesicles prior to their release via exocytosis. Transports catecholamines and indolamines with higher affinity for serotonin. Regulates the transvesicular monoaminergic gradient that determines the quantal size. Mediates presynaptic monoaminergic vesicle transport in the amygdala and prefrontal brain regions related with emotion processing in response to environmental stimuli. Its function is as follows. Unable to uptake serotonin. This Homo sapiens (Human) protein is Chromaffin granule amine transporter (SLC18A1).